A 251-amino-acid chain; its full sequence is tRNA (guanine-N(1)-)-methyltransferase (251 aa).

S-adenosyl-L-methionine is bound by residues Gly113 and 133–138 (MGDYVL).

The protein belongs to the RNA methyltransferase TrmD family. As to quaternary structure, homodimer.

The protein resides in the cytoplasm. The enzyme catalyses guanosine(37) in tRNA + S-adenosyl-L-methionine = N(1)-methylguanosine(37) in tRNA + S-adenosyl-L-homocysteine + H(+). In terms of biological role, specifically methylates guanosine-37 in various tRNAs. This chain is tRNA (guanine-N(1)-)-methyltransferase, found in Sodalis glossinidius (strain morsitans).